A 247-amino-acid chain; its full sequence is UPF0612 protein P20C8.01c (247 aa).

Coiled coils occupy residues 27 to 63 (IKRYERSVDSTLLEIDENKREALEKYIEERDRKMKYE) and 138 to 225 (DTVQ…DARS).

The protein belongs to the UPF0612 family.

Its subcellular location is the cytoplasm. The protein is UPF0612 protein P20C8.01c of Schizosaccharomyces pombe (strain 972 / ATCC 24843) (Fission yeast).